Consider the following 181-residue polypeptide: Inner membrane-spanning protein YciB (181 aa).

The next 5 membrane-spanning stretches (helical) occupy residues 8-28 (FPII…ATAA), 53-73 (ITLI…NAIF), 76-96 (WKPT…HFFG), 121-141 (LSWA…VYNF), and 149-169 (FKLF…AFYI).

This sequence belongs to the YciB family.

It is found in the cell inner membrane. Plays a role in cell envelope biogenesis, maintenance of cell envelope integrity and membrane homeostasis. The chain is Inner membrane-spanning protein YciB from Coxiella burnetii (strain CbuG_Q212) (Coxiella burnetii (strain Q212)).